We begin with the raw amino-acid sequence, 433 residues long: Divergent protein kinase domain 2B (433 aa).

The signal sequence occupies residues Met-1–Ser-31. Asn-100 carries an N-linked (GlcNAc...) asparagine glycan.

The protein belongs to the DIPK family.

It localises to the secreted. This chain is Divergent protein kinase domain 2B, found in Homo sapiens (Human).